The primary structure comprises 249 residues: Transcription repressor MYB5 (249 aa).

HTH myb-type domains follow at residues 20 to 72 and 73 to 127; these read KMGM…MNYL and RPSV…RKKL. DNA-binding regions (H-T-H motif) lie at residues 48-72 and 100-123; these read WRSL…MNYL and WSLI…NTHL. The interval 133–180 is disordered; that stretch reads DPQTHKPLDANNIHKPEEEVSGGQKYPLEPISSSHTDDTTVNGGDGDS. Over residues 135–150 the composition is skewed to basic and acidic residues; the sequence is QTHKPLDANNIHKPEE.

As to quaternary structure, interacts with BHLH002/EGL3/MYC146, BHLH012/MYC1 and BHLH042/TT8. Siliques.

Its subcellular location is the nucleus. Transcription activator, when associated with BHLH002/EGL3/MYC146, BHLH012/MYC1 or BHLH042/TT8. This chain is Transcription repressor MYB5 (MYB5), found in Arabidopsis thaliana (Mouse-ear cress).